An 895-amino-acid polypeptide reads, in one-letter code: Androgen receptor (895 aa).

Residues 1–533 are modulating; it reads MEVQLGLGRV…PIDYYFPPQK (533 aa). The interaction with ZNF318 stretch occupies residues 1–562; that stretch reads MEVQLGLGRV…GSCKVFFKRA (562 aa). 2 disordered regions span residues 33–155 and 175–211; these read VIQN…PTFP and QLLQ…YLGG. Composition is skewed to low complexity over residues 44–81 and 175–200; these read AASA…GSPQ and QLLQ…ASGA. Phosphoserine; by CDK9 is present on Ser66. Ser79 is modified (phosphoserine). Residues 201-211 are compositionally biased toward polar residues; that stretch reads PTSSKDNYLGG. Tyr208 carries the phosphotyrosine; by CSK modification. Position 241 is a phosphoserine (Ser241). Position 252 is a phosphotyrosine; by CSK and TNK2 (Tyr252). 4 positions are modified to phosphotyrosine; by CSK: Tyr292, Tyr331, Tyr342, and Tyr347. Tyr348 is subject to Phosphotyrosine; by CSK and TNK2. Lys371 participates in a covalent cross-link: Glycyl lysine isopeptide (Lys-Gly) (interchain with G-Cter in SUMO). Tyr378 is subject to Phosphotyrosine; by CSK. Lys496 participates in a covalent cross-link: Glycyl lysine isopeptide (Lys-Gly) (interchain with G-Cter in SUMO). A phosphotyrosine; by CSK mark is found at Tyr510 and Tyr527. Positions 527–894 are interaction with LPXN; it reads YYFPPQKTCL…GKVKPIYFHT (368 aa). Residues 534 to 607 constitute a DNA-binding region (nuclear receptor); sequence TCLICGDEAS…AGMTLGARKL (74 aa). 2 consecutive NR C4-type zinc fingers follow at residues 535-555 and 571-595; these read CLIC…CGSC and CASR…LRKC. The interval 547–637 is interaction with HIPK3; sequence YGALTCGSCK…TEETAQKLTV (91 aa). The segment at 567 to 894 is interaction with CCAR1; the sequence is QKYLCASRND…GKVKPIYFHT (328 aa). Positions 600–894 are interaction with KAT7; sequence MTLGARKLKK…GKVKPIYFHT (295 aa). Ser626 is modified (phosphoserine; by STK4/MST1). Residues 644-875 enclose the NR LBD domain; sequence ECQPIFLNVL…DFPEMMAEII (232 aa). Residues Asn681 and Arg728 each contribute to the 17beta-hydroxy-5alpha-androstan-3-one site. Residues Lys821 and Lys823 each participate in a glycyl lysine isopeptide (Lys-Gly) (interchain with G-Cter in ubiquitin) cross-link. Thr853 contacts 17beta-hydroxy-5alpha-androstan-3-one. Tyr891 bears the Phosphotyrosine; by CSK mark.

It belongs to the nuclear hormone receptor family. NR3 subfamily. As to quaternary structure, binds DNA as a homodimer. Part of a ternary complex containing AR, EFCAB6/DJBP and PARK7. Interacts with HIPK3 and NR0B2 in the presence of androgen. The ligand binding domain interacts with KAT7/HBO1 in the presence of dihydrotestosterone. Interacts with EFCAB6/DJBP, PQBP1, RANBP9, RBAK, SPDEF, SRA1, TGFB1I1 and RREB1. Interacts with ZMIZ1/ZIMP10 and ZMIZ2/ZMIP7 which both enhance its transactivation activity. Interacts with SLC30A9 and RAD54L2/ARIP4. Interacts with MACROD1 (via macro domain). Interacts via the ligand-binding domain with LXXLL and FXXLF motifs from NCOA1, NCOA2, NCOA3 and MAGEA11. Interacts (via nuclear receptor DNA binding domain and nuclear receptor ligand binding domain) with NCOA4. The AR N-terminal poly-Gln region binds Ran resulting in enhancement of AR-mediated transactivation. Ran-binding decreases as the poly-Gln length increases. Interacts with HIP1 (via coiled coil domain). Interacts (via ligand-binding domain) with TRIM68. Interacts with TNK2. Interacts with USP26. Interacts with RNF6. Interacts (regulated by RNF6 probably through polyubiquitination) with RNF14; regulates AR transcriptional activity. Interacts with PRMT2 and TRIM24. Interacts with RACK1. Interacts with RANBP10; this interaction enhances dihydrotestosterone-induced AR transcriptional activity. Interacts with PRPF6 in a hormone-independent way; this interaction enhances dihydrotestosterone-induced AR transcriptional activity. Interacts with STK4/MST1. Interacts with ZIPK/DAPK3. Interacts with LPXN. Interacts with MAK. Part of a complex containing AR, MAK and NCOA3. Interacts with CRY1. Interacts with CCAR1 and GATA2. Interacts with ZNF318. Interacts with BUD31. Interacts with ARID4A. Interacts with ARID4B. Interacts (via NR LBD domain) with ZBTB7A; the interaction is direct and androgen-dependent. Interacts with NCOR1. Interacts with NCOR2. Interacts with CRY2 in a ligand-dependent manner. Phosphorylated in prostate cancer cells in response to several growth factors including EGF. Phosphorylation is induced by c-Src kinase (CSK). Tyr-510 is one of the major phosphorylation sites and an increase in phosphorylation and Src kinase activity is associated with prostate cancer progression. Phosphorylation by TNK2 enhances the DNA-binding and transcriptional activity. Phosphorylation at Ser-66 by CDK9 regulates AR promoter selectivity and cell growth. Post-translationally, sumoylated on Lys-371 (major) and Lys-496. Ubiquitinated. Deubiquitinated by USP26. 'Lys-6' and 'Lys-27'-linked polyubiquitination by RNF6 modulates AR transcriptional activity and specificity. In terms of processing, palmitoylated by ZDHHC7 and ZDHHC21. Palmitoylation is required for plasma membrane targeting and for rapid intracellular signaling via ERK and AKT kinases and cAMP generation.

The protein localises to the nucleus. It is found in the cytoplasm. Functionally, steroid hormone receptors are ligand-activated transcription factors that regulate eukaryotic gene expression and affect cellular proliferation and differentiation in target tissues. Transcription factor activity is modulated by bound coactivator and corepressor proteins like ZBTB7A that recruits NCOR1 and NCOR2 to the androgen response elements/ARE on target genes, negatively regulating androgen receptor signaling and androgen-induced cell proliferation. Transcription activation is also down-regulated by NR0B2. Activated, but not phosphorylated, by HIPK3 and ZIPK/DAPK3. This chain is Androgen receptor (AR), found in Papio hamadryas (Hamadryas baboon).